The sequence spans 284 residues: uncharacterized protein (284 aa).

Positions 1-10 are enriched in polar residues; sequence MSNSVTNFEM. The tract at residues 1-28 is disordered; that stretch reads MSNSVTNFEMSSVLPGKKPCQGKNNESQ.

This is an uncharacterized protein from Escherichia coli (strain K12).